Here is a 236-residue protein sequence, read N- to C-terminus: ATP synthase subunit a (236 aa).

The next 5 membrane-spanning stretches (helical) occupy residues Ser18–Thr38, Val80–Ile100, Asp112–Ile132, Ile179–Ala199, and Ile200–Phe220.

Belongs to the ATPase A chain family. F-type ATPases have 2 components, CF(1) - the catalytic core - and CF(0) - the membrane proton channel. CF(1) has five subunits: alpha(3), beta(3), gamma(1), delta(1), epsilon(1). CF(0) has three main subunits: a(1), b(2) and c(9-12). The alpha and beta chains form an alternating ring which encloses part of the gamma chain. CF(1) is attached to CF(0) by a central stalk formed by the gamma and epsilon chains, while a peripheral stalk is formed by the delta and b chains.

The protein resides in the cell membrane. Functionally, key component of the proton channel; it plays a direct role in the translocation of protons across the membrane. The protein is ATP synthase subunit a of Priestia megaterium (strain ATCC 12872 / QMB1551) (Bacillus megaterium).